A 158-amino-acid polypeptide reads, in one-letter code: NAD(P)H-quinone oxidoreductase subunit J, chloroplastic (158 aa).

Belongs to the complex I 30 kDa subunit family. In terms of assembly, NDH is composed of at least 16 different subunits, 5 of which are encoded in the nucleus.

The protein localises to the plastid. Its subcellular location is the chloroplast thylakoid membrane. It carries out the reaction a plastoquinone + NADH + (n+1) H(+)(in) = a plastoquinol + NAD(+) + n H(+)(out). The catalysed reaction is a plastoquinone + NADPH + (n+1) H(+)(in) = a plastoquinol + NADP(+) + n H(+)(out). Its function is as follows. NDH shuttles electrons from NAD(P)H:plastoquinone, via FMN and iron-sulfur (Fe-S) centers, to quinones in the photosynthetic chain and possibly in a chloroplast respiratory chain. The immediate electron acceptor for the enzyme in this species is believed to be plastoquinone. Couples the redox reaction to proton translocation, and thus conserves the redox energy in a proton gradient. This Lactuca sativa (Garden lettuce) protein is NAD(P)H-quinone oxidoreductase subunit J, chloroplastic.